A 158-amino-acid polypeptide reads, in one-letter code: 6,7-dimethyl-8-ribityllumazine synthase (158 aa).

5-amino-6-(D-ribitylamino)uracil contacts are provided by residues Phe24, 58 to 60, and 82 to 84; these read AFE and AVI. 87 to 88 serves as a coordination point for (2S)-2-hydroxy-3-oxobutyl phosphate; sequence GT. His90 functions as the Proton donor in the catalytic mechanism. Residue Phe115 coordinates 5-amino-6-(D-ribitylamino)uracil. Arg129 contributes to the (2S)-2-hydroxy-3-oxobutyl phosphate binding site.

Belongs to the DMRL synthase family. As to quaternary structure, forms an icosahedral capsid composed of 60 subunits, arranged as a dodecamer of pentamers.

The enzyme catalyses (2S)-2-hydroxy-3-oxobutyl phosphate + 5-amino-6-(D-ribitylamino)uracil = 6,7-dimethyl-8-(1-D-ribityl)lumazine + phosphate + 2 H2O + H(+). Its pathway is cofactor biosynthesis; riboflavin biosynthesis; riboflavin from 2-hydroxy-3-oxobutyl phosphate and 5-amino-6-(D-ribitylamino)uracil: step 1/2. In terms of biological role, catalyzes the formation of 6,7-dimethyl-8-ribityllumazine by condensation of 5-amino-6-(D-ribitylamino)uracil with 3,4-dihydroxy-2-butanone 4-phosphate. This is the penultimate step in the biosynthesis of riboflavin. This chain is 6,7-dimethyl-8-ribityllumazine synthase, found in Azotobacter vinelandii (strain DJ / ATCC BAA-1303).